Reading from the N-terminus, the 647-residue chain is Glutamyl-tRNA(Gln) amidotransferase subunit B, mitochondrial (647 aa).

A disordered region spans residues 87–106 (QAKALKKSGHKKKKSSDNQT). Basic residues predominate over residues 90-100 (ALKKSGHKKKK).

This sequence belongs to the GatB/GatE family. GatB subfamily. Subunit of the heterotrimeric GatCAB amidotransferase (AdT) complex, composed of A, B and C subunits.

It localises to the mitochondrion. The enzyme catalyses L-glutamyl-tRNA(Gln) + L-glutamine + ATP + H2O = L-glutaminyl-tRNA(Gln) + L-glutamate + ADP + phosphate + H(+). Its function is as follows. Allows the formation of correctly charged Gln-tRNA(Gln) through the transamidation of misacylated Glu-tRNA(Gln) in the mitochondria. The reaction takes place in the presence of glutamine and ATP through an activated gamma-phospho-Glu-tRNA(Gln). The chain is Glutamyl-tRNA(Gln) amidotransferase subunit B, mitochondrial from Neurospora crassa (strain ATCC 24698 / 74-OR23-1A / CBS 708.71 / DSM 1257 / FGSC 987).